A 526-amino-acid chain; its full sequence is Amine oxidase [flavin-containing] A (526 aa).

Met1 bears the N-acetylmethionine mark. Residues 1–497 (MTDLEKPNLA…HTFLERNLPS (497 aa)) are Cytoplasmic-facing. Ser383 is subject to Phosphoserine. S-8alpha-FAD cysteine is present on Cys406. A helical; Anchor for type IV membrane protein transmembrane segment spans residues 498-518 (VPGLLKITGVSTSVALLCFVL). The Mitochondrial intermembrane segment spans residues 519 to 526 (YKIKKLPC). The segment at 520-522 (KIK) is interaction with membrane phospholipid headgroups.

It belongs to the flavin monoamine oxidase family. As to quaternary structure, monomer, homo- or heterodimer (containing two subunits of similar size). Each subunit contains a covalently bound flavin. Enzymatically active as monomer. FAD is required as a cofactor.

Its subcellular location is the mitochondrion outer membrane. It carries out the reaction a secondary aliphatic amine + O2 + H2O = a primary amine + an aldehyde + H2O2. The enzyme catalyses a primary methyl amine + O2 + H2O = an aldehyde + H2O2 + NH4(+). The catalysed reaction is (R)-adrenaline + O2 + H2O = (R)-3,4-dihydroxymandelaldehyde + methylamine + H2O2. It catalyses the reaction dopamine + O2 + H2O = 3,4-dihydroxyphenylacetaldehyde + H2O2 + NH4(+). It carries out the reaction tyramine + O2 + H2O = (4-hydroxyphenyl)acetaldehyde + H2O2 + NH4(+). The enzyme catalyses (R)-noradrenaline + O2 + H2O = (R)-3,4-dihydroxymandelaldehyde + H2O2 + NH4(+). The catalysed reaction is serotonin + O2 + H2O = (5-hydroxyindol-3-yl)acetaldehyde + H2O2 + NH4(+). It catalyses the reaction kynuramine + O2 + H2O = 3-(2-aminophenyl)-3-oxopropanal + H2O2 + NH4(+). It carries out the reaction tryptamine + O2 + H2O = indole-3-acetaldehyde + H2O2 + NH4(+). The enzyme catalyses 2-phenylethylamine + O2 + H2O = 2-phenylacetaldehyde + H2O2 + NH4(+). Functionally, catalyzes the oxidative deamination of primary and some secondary amine such as neurotransmitters, with concomitant reduction of oxygen to hydrogen peroxide and has important functions in the metabolism of neuroactive and vasoactive amines in the central nervous system and peripheral tissues. Preferentially oxidizes serotonin. Also catalyzes the oxidative deamination of kynuramine to 3-(2-aminophenyl)-3-oxopropanal that can spontaneously condense to 4-hydroxyquinoline. The chain is Amine oxidase [flavin-containing] A from Rattus norvegicus (Rat).